Here is a 182-residue protein sequence, read N- to C-terminus: Ribosome maturation factor RimM (182 aa).

One can recognise a PRC barrel domain in the interval 103–182 (EDDYYWKDLM…RVEVDWDPGF (80 aa)).

It belongs to the RimM family. As to quaternary structure, binds ribosomal protein uS19.

It localises to the cytoplasm. An accessory protein needed during the final step in the assembly of 30S ribosomal subunit, possibly for assembly of the head region. Essential for efficient processing of 16S rRNA. May be needed both before and after RbfA during the maturation of 16S rRNA. It has affinity for free ribosomal 30S subunits but not for 70S ribosomes. This chain is Ribosome maturation factor RimM, found in Yersinia enterocolitica serotype O:8 / biotype 1B (strain NCTC 13174 / 8081).